Here is a 188-residue protein sequence, read N- to C-terminus: Cytochrome b561 homolog 2 (188 aa).

The Cytoplasmic segment spans residues 1–15 (MSFTNTPERYGVISA). A helical transmembrane segment spans residues 16–36 (AFHWLSAIIVYGMFALGLWMV). Residues His18 and His52 each coordinate heme b. At 37–54 (TLSYYDGWYHKAPELHKS) the chain is on the periplasmic side. Residues 55–75 (IGILLMMGLVIRVLWRVISPP) traverse the membrane as a helical segment. The Cytoplasmic portion of the chain corresponds to 76–91 (PGPLPSYSPMTRLAAR). A helical transmembrane segment spans residues 92–112 (AGHLALYLLLFAIGISGYLIS). Residues 113-143 (TADGKPISVFGWFDVPATLADAGAQADFAGA) are Periplasmic-facing. The helical transmembrane segment at 144–164 (LHFWLAWSVVVLSVMHGFMAL) threads the bilayer. 2 residues coordinate heme b: His145 and His159. The Cytoplasmic segment spans residues 165 to 188 (KHHFIDKDDTLKRMLGKSSSDYGV).

It belongs to the cytochrome b561 family. Heme b serves as cofactor.

It localises to the cell inner membrane. The chain is Cytochrome b561 homolog 2 (yceJ) from Escherichia coli (strain K12).